Here is a 61-residue protein sequence, read N- to C-terminus: GKVWDWIKKTAKDVLNSDVAKQLKNKALNAAKNFVAEKIGATPSEAGQMPFDEFMDILHYY.

Positions 45-61 (EAGQMPFDEFMDILHYY) are excised as a propeptide.

This sequence belongs to the non-disulfide-bridged peptide (NDBP) superfamily. Long chain multifunctional peptide (group 2) family. In terms of tissue distribution, expressed by the venom gland.

It localises to the secreted. The protein resides in the target cell membrane. Its function is as follows. At high concentrations, acts as a pore former in cellular membranes and causes the leakage of the cells. At submicromolar concentrations, degranulates granulocytes and has a weak hemolytic activity against human erythrocytes. Also strongly inhibits the production of superoxide anions. Has a strong antibacterial activity against Gram-negative bacteria but is less active against Gram-positive bacteria. Also has antifungal activity. This Opistophthalmus carinatus (African yellow leg scorpion) protein is Opistoporin-4.